The chain runs to 196 residues: Corrinoid adenosyltransferase (196 aa).

36 to 42 contacts ATP; that stretch reads GNGKGKT.

Belongs to the Cob(I)alamin adenosyltransferase family.

The protein resides in the cytoplasm. It carries out the reaction 2 cob(II)yrinate a,c diamide + reduced [electron-transfer flavoprotein] + 2 ATP = 2 adenosylcob(III)yrinate a,c-diamide + 2 triphosphate + oxidized [electron-transfer flavoprotein] + 3 H(+). It catalyses the reaction 2 cob(II)alamin + reduced [electron-transfer flavoprotein] + 2 ATP = 2 adenosylcob(III)alamin + 2 triphosphate + oxidized [electron-transfer flavoprotein] + 3 H(+). Its pathway is cofactor biosynthesis; adenosylcobalamin biosynthesis; adenosylcobalamin from cob(II)yrinate a,c-diamide: step 2/7. In terms of biological role, required for both de novo synthesis of the corrin ring for the assimilation of exogenous corrinoids. Participates in the adenosylation of a variety of incomplete and complete corrinoids. This chain is Corrinoid adenosyltransferase (btuR), found in Escherichia coli O6:H1 (strain CFT073 / ATCC 700928 / UPEC).